We begin with the raw amino-acid sequence, 524 residues long: Solute carrier family 40 member 1 (524 aa).

A compositionally biased stretch (basic and acidic residues) spans Met-1–Glu-18. The tract at residues Met-1–Pro-30 is disordered. Transmembrane regions (helical) follow at residues Ser-70 to Val-92, Leu-109 to Val-129, Leu-137 to Ser-157, Gly-191 to Val-211, Ile-218 to Val-238, Val-314 to Leu-334, Tyr-347 to Tyr-367, Gly-380 to Val-400, Met-409 to Ile-429, Gly-446 to Val-466, and Phe-472 to Ile-492.

It belongs to the ferroportin (FP) (TC 2.A.100) family. SLC40A subfamily.

Its subcellular location is the membrane. Functionally, may be involved in iron transport and iron homeostasis. The chain is Solute carrier family 40 member 1 (IREG1) from Arabidopsis thaliana (Mouse-ear cress).